The chain runs to 241 residues: tRNA (guanine-N(1)-)-methyltransferase (241 aa).

S-adenosyl-L-methionine is bound by residues Gly108 and 127–132 (LGDYVL).

This sequence belongs to the RNA methyltransferase TrmD family. As to quaternary structure, homodimer.

The protein localises to the cytoplasm. It catalyses the reaction guanosine(37) in tRNA + S-adenosyl-L-methionine = N(1)-methylguanosine(37) in tRNA + S-adenosyl-L-homocysteine + H(+). Specifically methylates guanosine-37 in various tRNAs. The polypeptide is tRNA (guanine-N(1)-)-methyltransferase (Streptococcus suis (strain 98HAH33)).